Reading from the N-terminus, the 206-residue chain is Large ribosomal subunit protein uL4 (206 aa).

The segment covering 48 to 59 (THDTKTRSEVRG) has biased composition (basic and acidic residues). Residues 48–77 (THDTKTRSEVRGGGRKPWRQKGTGRARHGS) are disordered. Basic residues predominate over residues 60 to 77 (GGRKPWRQKGTGRARHGS).

The protein belongs to the universal ribosomal protein uL4 family. In terms of assembly, part of the 50S ribosomal subunit.

In terms of biological role, one of the primary rRNA binding proteins, this protein initially binds near the 5'-end of the 23S rRNA. It is important during the early stages of 50S assembly. It makes multiple contacts with different domains of the 23S rRNA in the assembled 50S subunit and ribosome. Functionally, forms part of the polypeptide exit tunnel. This chain is Large ribosomal subunit protein uL4, found in Pelotomaculum thermopropionicum (strain DSM 13744 / JCM 10971 / SI).